We begin with the raw amino-acid sequence, 227 residues long: MAYPFQLGLQDATSPIMEELTNFHDHTLMIVFLISSLVLYIISLMLTTKLTHTSTMDAQEVETIWTILPAVILILIALPSLRILYMMDEINNPVLTVKTMGHQWYWSYEYTDYKDLCFDSYMVPTNELKPGELRLLEVDNRVVLPMELPIRMLISSEDVLHSWAVPSLGLKTDAIPGRLNQATVTSNRPGLFYGQCSEICGSNHSFMPIVLEMVPLKHFENWSTSMI.

Over 1–14 the chain is Mitochondrial intermembrane; the sequence is MAYPFQLGLQDATS. Residues 15–45 traverse the membrane as a helical segment; that stretch reads PIMEELTNFHDHTLMIVFLISSLVLYIISLM. Residues 46–59 lie on the Mitochondrial matrix side of the membrane; it reads LTTKLTHTSTMDAQ. The helical transmembrane segment at 60–87 threads the bilayer; it reads EVETIWTILPAVILILIALPSLRILYMM. Residues 88–227 are Mitochondrial intermembrane-facing; the sequence is DEINNPVLTV…HFENWSTSMI (140 aa). Residues H161, C196, E198, C200, H204, and M207 each contribute to the Cu cation site. Position 198 (E198) interacts with Mg(2+).

This sequence belongs to the cytochrome c oxidase subunit 2 family. As to quaternary structure, component of the cytochrome c oxidase (complex IV, CIV), a multisubunit enzyme composed of 14 subunits. The complex is composed of a catalytic core of 3 subunits MT-CO1, MT-CO2 and MT-CO3, encoded in the mitochondrial DNA, and 11 supernumerary subunits COX4I, COX5A, COX5B, COX6A, COX6B, COX6C, COX7A, COX7B, COX7C, COX8 and NDUFA4, which are encoded in the nuclear genome. The complex exists as a monomer or a dimer and forms supercomplexes (SCs) in the inner mitochondrial membrane with NADH-ubiquinone oxidoreductase (complex I, CI) and ubiquinol-cytochrome c oxidoreductase (cytochrome b-c1 complex, complex III, CIII), resulting in different assemblies (supercomplex SCI(1)III(2)IV(1) and megacomplex MCI(2)III(2)IV(2)). Found in a complex with TMEM177, COA6, COX18, COX20, SCO1 and SCO2. Interacts with TMEM177 in a COX20-dependent manner. Interacts with COX20. Interacts with COX16. Requires Cu cation as cofactor.

The protein resides in the mitochondrion inner membrane. The enzyme catalyses 4 Fe(II)-[cytochrome c] + O2 + 8 H(+)(in) = 4 Fe(III)-[cytochrome c] + 2 H2O + 4 H(+)(out). Component of the cytochrome c oxidase, the last enzyme in the mitochondrial electron transport chain which drives oxidative phosphorylation. The respiratory chain contains 3 multisubunit complexes succinate dehydrogenase (complex II, CII), ubiquinol-cytochrome c oxidoreductase (cytochrome b-c1 complex, complex III, CIII) and cytochrome c oxidase (complex IV, CIV), that cooperate to transfer electrons derived from NADH and succinate to molecular oxygen, creating an electrochemical gradient over the inner membrane that drives transmembrane transport and the ATP synthase. Cytochrome c oxidase is the component of the respiratory chain that catalyzes the reduction of oxygen to water. Electrons originating from reduced cytochrome c in the intermembrane space (IMS) are transferred via the dinuclear copper A center (CU(A)) of subunit 2 and heme A of subunit 1 to the active site in subunit 1, a binuclear center (BNC) formed by heme A3 and copper B (CU(B)). The BNC reduces molecular oxygen to 2 water molecules using 4 electrons from cytochrome c in the IMS and 4 protons from the mitochondrial matrix. The sequence is that of Cytochrome c oxidase subunit 2 (MT-CO2) from Praomys taitae (Taita hill rat).